The primary structure comprises 362 residues: P2Y purinoceptor 1 (362 aa).

The Extracellular segment spans residues 1–40; it reads MTEALISAALNGTQPELLAGGWAAGNASTKCSLTKTGFQF. N-linked (GlcNAc...) asparagine glycans are attached at residues Asn11 and Asn26. Cystine bridges form between Cys31-Cys285 and Cys113-Cys191. An ADP-binding site is contributed by Lys35. The helical transmembrane segment at 41–63 threads the bilayer; sequence YYLPTVYILVFITGFLGNSVAIW. Residues 64-76 lie on the Cytoplasmic side of the membrane; it reads MFVFHMRPWSGIS. Residues 77-98 form a helical membrane-spanning segment; that stretch reads VYMFNLALADFLYVLTLPALIF. At 99–114 the chain is on the extracellular side; it reads YYFNKTDWIFGDVMCK. N-linked (GlcNAc...) asparagine glycosylation occurs at Asn102. A helical membrane pass occupies residues 115–136; sequence LQRFIFHVNLYGSILFLTCISV. Residues 137–155 lie on the Cytoplasmic side of the membrane; it reads HRYTGVVHPLKSLGRLKKK. The helical transmembrane segment at 156–177 threads the bilayer; the sequence is NAVYVSSLVWALVVAVIAPILF. At 178-203 the chain is on the extracellular side; it reads YSGTGVRRNKTITCYDTTADEYLRSY. N-linked (GlcNAc...) asparagine glycosylation is present at Asn186. Residue 192–194 coordinates ADP; that stretch reads YDT. A helical membrane pass occupies residues 204-226; the sequence is FVYSMCTTVFMFCIPFIVILGCY. Residues 227-249 lie on the Cytoplasmic side of the membrane; that stretch reads GLIVKALIYKDLDNSPLRRKSIY. Residues 250–273 traverse the membrane as a helical segment; the sequence is LVIIVLTVFAVSYLPFHVMKTLNL. Residues 272-276, 292-295, and Arg299 contribute to the ADP site; these read NLRAR and YATY. Residues 274 to 292 are Extracellular-facing; that stretch reads RARLDFQTPQMCAFNDKVY. The chain crosses the membrane as a helical span at residues 293-314; that stretch reads ATYQVTRGLASLNSCVDPILYF. At 315–362 the chain is on the cytoplasmic side; the sequence is LAGDTFRRRLSRATRKSSRRSEPNVQSKSEEMTLNILTEYKQNGDTSL.

Belongs to the G-protein coupled receptor 1 family. As to expression, mainly found in blood, brain, and lung. To a lesser extent in stomach, gut and skeletal muscle.

It localises to the cell membrane. Its function is as follows. Receptor for extracellular adenine nucleotides such as ADP. In platelets, binding to ADP leads to mobilization of intracellular calcium ions via activation of phospholipase C, a change in platelet shape, and ultimately platelet aggregation. In Meleagris gallopavo (Wild turkey), this protein is P2Y purinoceptor 1 (P2RY1).